The primary structure comprises 412 residues: Argininosuccinate synthase (412 aa).

ATP-binding positions include 10–18 (AYSGGLDTS) and Ala-36. Tyr-87 and Ser-92 together coordinate L-citrulline. 115–123 (SHGATGKGN) serves as a coordination point for ATP. 3 residues coordinate L-aspartate: Thr-119, Asn-123, and Asp-124. Position 123 (Asn-123) interacts with L-citrulline. L-citrulline-binding residues include Arg-127, Ser-180, Ser-189, Glu-270, and Tyr-282.

The protein belongs to the argininosuccinate synthase family. Homotetramer.

It carries out the reaction L-citrulline + L-aspartate + ATP = 2-(N(omega)-L-arginino)succinate + AMP + diphosphate + H(+). The protein operates within amino-acid biosynthesis; L-arginine biosynthesis; L-arginine from L-ornithine and carbamoyl phosphate: step 2/3. It participates in nitrogen metabolism; urea cycle; (N(omega)-L-arginino)succinate from L-aspartate and L-citrulline: step 1/1. This is Argininosuccinate synthase from Aedes aegypti (Yellowfever mosquito).